Consider the following 147-residue polypeptide: MSRPTSSSESGIEEGLAFQPRFDASGLVTCVATDARTGDVLMVAHMNEEALRRTVETGDAWYYSRSRKALWRKGESSGQVQRVVEMRTDCDQDAVWIKVEQRGAACHTGRRSCFYRAVTRGEGGEARVAFVDADRLFDPADVYHKKS.

Asp89 lines the Mg(2+) pocket. Cys90 contacts Zn(2+). Asp91 and Asp93 together coordinate Mg(2+). Zn(2+)-binding residues include Cys106 and Cys113.

This sequence belongs to the PRA-CH family. As to quaternary structure, homodimer. The cofactor is Mg(2+). Zn(2+) is required as a cofactor.

Its subcellular location is the cytoplasm. The enzyme catalyses 1-(5-phospho-beta-D-ribosyl)-5'-AMP + H2O = 1-(5-phospho-beta-D-ribosyl)-5-[(5-phospho-beta-D-ribosylamino)methylideneamino]imidazole-4-carboxamide. Its pathway is amino-acid biosynthesis; L-histidine biosynthesis; L-histidine from 5-phospho-alpha-D-ribose 1-diphosphate: step 3/9. Functionally, catalyzes the hydrolysis of the adenine ring of phosphoribosyl-AMP. In Nitrobacter hamburgensis (strain DSM 10229 / NCIMB 13809 / X14), this protein is Phosphoribosyl-AMP cyclohydrolase.